Reading from the N-terminus, the 269-residue chain is Arginine and glutamate-rich protein 1-B (269 aa).

Positions 1–57 (MGRSRSRSSSRSKHSKTSKHSKKRSRSRSRSRDRERKRRSKSRESKRNRRRESRSRS) are enriched in basic residues. The interval 1–70 (MGRSRSRSSS…TATSRRDRER (70 aa)) is necessary and sufficient for RNA binding. Disordered regions lie at residues 1–109 (MGRS…MERQ) and 233–269 (RMKL…KASE). 3 stretches are compositionally biased toward basic and acidic residues: residues 64–80 (SRRD…RIDI), 89–109 (SAVD…MERQ), and 233–249 (RMKL…EEQK). The interval 71 to 269 (AASPPERIDI…KLSFSLKASE (199 aa)) is necessary and sufficient for transcriptional regulation.

It belongs to the ARGLU1 family.

It localises to the nucleus. It is found in the nucleus speckle. Its subcellular location is the chromosome. Its function is as follows. Dual function regulator of gene expression; regulator of transcription and modulator of alternative splicing. General coactivator of nuclear receptor-induced gene expression. The chain is Arginine and glutamate-rich protein 1-B (arglu1b) from Danio rerio (Zebrafish).